A 379-amino-acid chain; its full sequence is MLGKAVHSLSRIGDELYLEPLEDGLSLRTVNSSRSAYACFLFAPLFFQQYQAATPGQDLLRCKILMKSFLSVFRSLAMLEKTVEKCCISLNGRSSRLVVQLHCKFGVRKTHNLSFQDCESLQAVFDPASCPHMLRAPARVLGEAVLPFPPALAEVTLGIGRGRRVILRSYHEEEADSTAKAMVTEMCLGEEDFQQLQAQEGVAITFCLKEFRGLLSFAESANLNLSIHFDAPGRPAIFTIKDSLLDGHFVLATLSDTDSHSQDLGSPERHQPVPQLQAHSIPHPDDFANDDIDSYMIAMETTIGNEGSRVLPSISLSPGPQHPESPGLHSEEDEAEPSTVPGTPPPKKFRSLFFGSILAPARSPQGPSPVLAEDSEGEG.

Tyr17 is modified (phosphotyrosine). The interval 40–80 (FLFAPLFFQQYQAATPGQDLLRCKILMKSFLSVFRSLAMLE) is possesses 3'-5' exonuclease activity. The sufficient for interaction with ABL1 stretch occupies residues 255 to 379 (SDTDSHSQDL…VLAEDSEGEG (125 aa)). Residues 257–271 (TDSHSQDLGSPERHQ) are compositionally biased toward basic and acidic residues. Disordered regions lie at residues 257–289 (TDSH…DFAN) and 308–379 (SRVL…EGEG). 7 positions are modified to phosphoserine: Ser261, Ser266, Ser317, Ser330, Ser363, Ser368, and Ser375.

The protein belongs to the rad9 family. In terms of assembly, component of the toroidal 9-1-1 (RAD9-RAD1-HUS1) complex, composed of RAD9A, RAD1 and HUS1. The 9-1-1 complex associates with LIG1, POLB, FEN1, RAD17, HDAC1, RPA1 and RPA2. The 9-1-1 complex associates with the RAD17-RFC complex. RAD9A interacts with BCL2L1, FEN1, RAD9B, ABL1, RPA1, ATAD5 and RPA2. Interacts with DNAJC7. Interacts (when phosphorylated) with TOPBP1. Constitutively phosphorylated on serine and threonine amino acids in absence of DNA damage. Hyperphosphorylated by PRKCD and ABL1 upon DNA damage. Its phosphorylation by PRKCD may be required for the formation of the 9-1-1 complex. Phosphorylated at Ser-330 and Ser-375 by CK2, promoting interaction with TOPBP1.

The protein resides in the nucleus. The enzyme catalyses Exonucleolytic cleavage in the 3'- to 5'-direction to yield nucleoside 5'-phosphates.. Its function is as follows. Component of the 9-1-1 cell-cycle checkpoint response complex that plays a major role in DNA repair. The 9-1-1 complex is recruited to DNA lesion upon damage by the RAD17-replication factor C (RFC) clamp loader complex. Acts then as a sliding clamp platform on DNA for several proteins involved in long-patch base excision repair (LP-BER). The 9-1-1 complex stimulates DNA polymerase beta (POLB) activity by increasing its affinity for the 3'-OH end of the primer-template and stabilizes POLB to those sites where LP-BER proceeds; endonuclease FEN1 cleavage activity on substrates with double, nick, or gap flaps of distinct sequences and lengths; and DNA ligase I (LIG1) on long-patch base excision repair substrates. The 9-1-1 complex is necessary for the recruitment of RHNO1 to sites of double-stranded breaks (DSB) occurring during the S phase. RAD9A possesses 3'-&gt;5' double stranded DNA exonuclease activity. This Macaca fascicularis (Crab-eating macaque) protein is Cell cycle checkpoint control protein RAD9A (RAD9A).